Reading from the N-terminus, the 714-residue chain is Fimbrin-3 (714 aa).

The region spanning 7-55 (VIVSDPWLQSQLTQVELRSLNSKFVALKNQSGKVTLEDLPSVLVKVKSL) is the EF-hand domain. 4 Calponin-homology (CH) domains span residues 124–241 (QSEK…KIQL), 269–372 (LPPE…HERN), 393–499 (CRDE…RTHM), and 514–622 (DMTD…YWSL). Actin-binding regions lie at residues 124–372 (QSEK…HERN) and 393–622 (CRDE…YWSL). The span at 628–662 (SSESSSSSSDSSSTHSTTTTCTSTCTSTDASPAPS) shows a compositional bias: low complexity. The disordered stretch occupies residues 628-694 (SSESSSSSSD…NEVSSLTIEE (67 aa)). Residues 670 to 680 (SSLNGEVSSLT) show a composition bias toward polar residues. Positions 681 to 694 (IEEDNEVSSLTIEE) are enriched in acidic residues.

As to quaternary structure, interacts with F-actin.

It is found in the cytoplasm. It localises to the cytoskeleton. Functionally, cross-links actin filaments (F-actin). Stabilizes and prevents F-actin depolymerization mediated by profilin. May regulate actin cytoarchitecture, cell cycle, cell division, cell elongation and cytoplasmic tractus. This Arabidopsis thaliana (Mouse-ear cress) protein is Fimbrin-3.